Consider the following 607-residue polypeptide: UvrABC system protein C (607 aa).

A GIY-YIG domain is found at 15–94 (ENPGVYLMKN…IKRHRPYFNV (80 aa)). Residues 204 to 239 (DQVLKLLIRLMNEASARLDYETAALRRDQIASIKEV) enclose the UVR domain.

It belongs to the UvrC family. In terms of assembly, interacts with UvrB in an incision complex.

It localises to the cytoplasm. The UvrABC repair system catalyzes the recognition and processing of DNA lesions. UvrC both incises the 5' and 3' sides of the lesion. The N-terminal half is responsible for the 3' incision and the C-terminal half is responsible for the 5' incision. In Dehalococcoides mccartyi (strain CBDB1), this protein is UvrABC system protein C.